We begin with the raw amino-acid sequence, 483 residues long: Phloretin 2'-O-glucosyltransferase (483 aa).

Histidine 15 (proton acceptor) is an active-site residue. Histidine 15 serves as a coordination point for an anthocyanidin. Aspartate 118 (charge relay) is an active-site residue. Residues threonine 140, alanine 360, glutamine 362, histidine 377, tryptophan 380, asparagine 381, serine 382, and glutamate 385 each contribute to the UDP-alpha-D-glucose site. Residue alanine 400 coordinates an anthocyanidin. Residues glutamate 401 and glutamine 402 each coordinate UDP-alpha-D-glucose.

It belongs to the UDP-glycosyltransferase family.

The enzyme catalyses phloretin + UDP-alpha-D-glucose = phlorizin + UDP + H(+). Functionally, glycosyltransferase that possesses phloretin 2'-O-glycosyltransferase activity. Converts phloretin to phlorizin (phloretin 2'-O-glucoside), a potent antioxidant. Is specific for phloretin and does not possess glycosyltransferase activity toward naringenin, naringenin chalcone, eriodictyol, eriodictyol chalcone, apigenin, luteolin, kaempferol, quercetin, isoliquiritigenin, butein, caffeic acid, 2-coumaric acid, 3-coumaric acid, 3-hydroxybenzoic acid, 3,4-dihydroxybenzoic acid and 3,4-dihydroxyhydrocinnamic acid. Can glycosylate phloretin in the presence of UDP-glucose, UDP-xylose and UDP-galactose. The protein is Phloretin 2'-O-glucosyltransferase of Pyrus communis (Pear).